We begin with the raw amino-acid sequence, 489 residues long: ATP synthase subunit beta, chloroplastic (489 aa).

Residue 170 to 177 participates in ATP binding; that stretch reads GGAGVGKT.

This sequence belongs to the ATPase alpha/beta chains family. F-type ATPases have 2 components, CF(1) - the catalytic core - and CF(0) - the membrane proton channel. CF(1) has five subunits: alpha(3), beta(3), gamma(1), delta(1), epsilon(1). CF(0) has four main subunits: a(1), b(1), b'(1) and c(9-12).

Its subcellular location is the plastid. The protein resides in the chloroplast thylakoid membrane. It catalyses the reaction ATP + H2O + 4 H(+)(in) = ADP + phosphate + 5 H(+)(out). Functionally, produces ATP from ADP in the presence of a proton gradient across the membrane. The catalytic sites are hosted primarily by the beta subunits. In Zygnema circumcarinatum (Green alga), this protein is ATP synthase subunit beta, chloroplastic.